We begin with the raw amino-acid sequence, 105 residues long: Met repressor (105 aa).

This sequence belongs to the MetJ family. As to quaternary structure, homodimer.

It is found in the cytoplasm. This regulatory protein, when combined with SAM (S-adenosylmethionine) represses the expression of the methionine regulon and of enzymes involved in SAM synthesis. The protein is Met repressor of Pectobacterium carotovorum subsp. carotovorum (strain PC1).